A 450-amino-acid polypeptide reads, in one-letter code: Glucose-6-phosphate isomerase (450 aa).

The active-site Proton donor is Glu291. Catalysis depends on residues His312 and Lys426.

The protein belongs to the GPI family.

Its subcellular location is the cytoplasm. It catalyses the reaction alpha-D-glucose 6-phosphate = beta-D-fructose 6-phosphate. It participates in carbohydrate biosynthesis; gluconeogenesis. Its pathway is carbohydrate degradation; glycolysis; D-glyceraldehyde 3-phosphate and glycerone phosphate from D-glucose: step 2/4. Functionally, catalyzes the reversible isomerization of glucose-6-phosphate to fructose-6-phosphate. The polypeptide is Glucose-6-phosphate isomerase (Clostridium botulinum (strain Loch Maree / Type A3)).